A 223-amino-acid polypeptide reads, in one-letter code: Kinetochore protein Spc25 (223 aa).

The stretch at 51–116 (RHQRKVGKLQ…QRKNEIMERI (66 aa)) forms a coiled coil.

It belongs to the SPC25 family. In terms of assembly, component of the Ndc80 complex, which is composed of Ndc80, Nuf2 and Spc25.

Its subcellular location is the nucleus. The protein resides in the chromosome. It is found in the centromere. It localises to the kinetochore. Its function is as follows. Acts as a component of the essential kinetochore-associated Ndc80 complex, which is required for chromosome segregation and spindle checkpoint activity during meiosis and mitosis. Required for kinetochore integrity and the organization of stable microtubule binding sites in the outer plate of the kinetochore. Participates in SAC signaling that responds specifically to disruptions in spindle microtubule dynamics. The NDC80 complex synergistically enhances the affinity of the SKA1 complex for microtubules and may allow the NDC80 complex to track depolymerizing microtubules. This Drosophila yakuba (Fruit fly) protein is Kinetochore protein Spc25.